We begin with the raw amino-acid sequence, 173 residues long: Inner membrane protein YbcI (173 aa).

Topologically, residues 1–12 are cytoplasmic; sequence MPTVITHAAVPL. Residues 13-35 traverse the membrane as a helical segment; the sequence is CIGLGLGSKVIPPRLLFAGIILA. Over 36-54 the chain is Periplasmic; sequence MLPDADVLSFKFGVAYGNV. The chain crosses the membrane as a helical span at residues 55 to 77; sequence FGHRGFTHSLVFAFVVPLLCVFI. Residues 78–83 lie on the Cytoplasmic side of the membrane; it reads GRRWFR. Residues 84–103 form a helical membrane-spanning segment; that stretch reads AGLIRCWLFLTVSLLSHSLL. Residues 104–147 lie on the Periplasmic side of the membrane; the sequence is DSVTTGGKGVGWLWPWSDERFFAPWQVIKVAPFALSRYTTPYGH. Residues 148–170 form a helical membrane-spanning segment; that stretch reads QVIISELMWVWLPGMLLMGMLWW. The Cytoplasmic portion of the chain corresponds to 171 to 173; the sequence is RRR.

It is found in the cell inner membrane. The sequence is that of Inner membrane protein YbcI (ybcI) from Escherichia coli (strain K12).